Here is a 327-residue protein sequence, read N- to C-terminus: MTHLQAGLSPETLEKARLELNENPDTLHQDIQEVRDMVITRPDIGFLRTDDAFILRFLRARKFHHFEAFRLLAQYFEYRQQNLDMFKSFKATDPGIKQALKDGFPGGLANLDHYGRKILVLFAANWDQSRYTLVDILRAILLSLEAMIEDPELQVNGFVLIIDWSNFTFKQASKLTPNMLRLAIEGLQDSFPARFGGIHFVNQPWYIHALYTVIRPFLKEKTRKRIFLHGNNLNSLHQLIHPEILPSEFGGMLPPYDMGTWARTLLDHEYDDDSEYNVDSYNMPVKDVDKELSPKSMKRSQSVVDPTALKRMDKSEEENMQPLLALD.

Residues 96-257 (IKQALKDGFP…EFGGMLPPYD (162 aa)) form the CRAL-TRIO domain. Residues 289-327 (DKELSPKSMKRSQSVVDPTALKRMDKSEEENMQPLLALD) are disordered.

In terms of assembly, forms a complex with clathrin heavy chain and gamma-adaptin.

Its subcellular location is the golgi apparatus. The protein localises to the trans-Golgi network membrane. It localises to the early endosome membrane. The protein resides in the cytoplasmic vesicle. It is found in the clathrin-coated vesicle. In terms of biological role, required for normal morphology of late endosomes and/or lysosomes in neurons. Binds phosphatidylinositol 3,5-bisphosphate (PtdIns(3,5)P2). The protein is Clavesin-2 (Clvs2) of Mus musculus (Mouse).